Here is a 148-residue protein sequence, read N- to C-terminus: Ribonuclease P protein component (148 aa).

Residues 119–148 (PLPAAPGTMPPARAPRPSSLSPTEPDPRSD) form a disordered region.

Belongs to the RnpA family. Consists of a catalytic RNA component (M1 or rnpB) and a protein subunit.

It carries out the reaction Endonucleolytic cleavage of RNA, removing 5'-extranucleotides from tRNA precursor.. Its function is as follows. RNaseP catalyzes the removal of the 5'-leader sequence from pre-tRNA to produce the mature 5'-terminus. It can also cleave other RNA substrates such as 4.5S RNA. The protein component plays an auxiliary but essential role in vivo by binding to the 5'-leader sequence and broadening the substrate specificity of the ribozyme. The chain is Ribonuclease P protein component from Xanthomonas campestris pv. campestris (strain 8004).